A 1151-amino-acid chain; its full sequence is Phospholipid-transporting ATPase NEO1 (1151 aa).

Disordered stretches follow at residues 1–21 (MPNP…NNNQ) and 73–95 (LDNF…THPL). The Extracellular segment spans residues 1 to 184 (MPNPPSFKSH…LSNAKYNAVT (184 aa)). A compositionally biased stretch (polar residues) spans 12 to 21 (QNLFNSNNNQ). Residues 51–104 (EPLSKHNTVGDRESFEMRTVDDLDNFSNHSSDSHRKSSNTDTHPLMYDNRLSQD) are required for endosome-to-Golgi sorting. At S102 the chain carries Phosphoserine. The chain crosses the membrane as a helical span at residues 185–205 (FVPTLLYEQFKFFYNLYFLVV). Topologically, residues 206 to 209 (ALSQ) are cytoplasmic. Residues 210–230 (AVPALRIGYLSSYIVPLAFVL) traverse the membrane as a helical segment. The Extracellular segment spans residues 231-367 (TVTMAKEAID…TSNPLSVDNT (137 aa)). The chain crosses the membrane as a helical span at residues 368–388 (LWANTVLASSGFCIACVVYTG). Residues 389-416 (RDTRQAMNTTTAKVKTGLLELEINSISK) are Cytoplasmic-facing. The chain crosses the membrane as a helical span at residues 417 to 437 (ILCACVFALSILLVAFAGFHN). D438 is a topological domain (extracellular). A helical membrane pass occupies residues 439-459 (DWYIDILRYLILFSTIIPVSL). Residues 460 to 947 (RVNLDLAKSV…KLAQFVMHRG (488 aa)) lie on the Cytoplasmic side of the membrane. D503 serves as the catalytic 4-aspartylphosphate intermediate. Residues D503, K504, and T505 each coordinate ATP. D503 provides a ligand contact to Mg(2+). T505 provides a ligand contact to Mg(2+). S551 is modified (phosphoserine). ATP-binding residues include E597, F640, S642, K645, K664, R693, T694, T774, G775, D776, R856, and K862. Residue D882 participates in Mg(2+) binding. ATP contacts are provided by N885 and D886. D886 serves as a coordination point for Mg(2+). Residues 948-968 (LIIAICQAVYSICSLFEPIAL) form a helical membrane-spanning segment. The Extracellular segment spans residues 969 to 970 (YQ). Residues 971–991 (GWLMVGYATCYTMAPVFSLTL) form a helical membrane-spanning segment. Residues 992 to 1020 (DHDIEESLTKIYPELYKELTEGKSLSYKT) lie on the Cytoplasmic side of the membrane. A helical transmembrane segment spans residues 1021 to 1041 (FFVWVLLSLFQGSVIQLFSQA). Residues 1042–1052 (FTSLLDTDFTR) lie on the Extracellular side of the membrane. The chain crosses the membrane as a helical span at residues 1053 to 1073 (MVAISFTALVVNELIMVALEI). The Cytoplasmic portion of the chain corresponds to 1074-1078 (YTWNK). A helical transmembrane segment spans residues 1079-1099 (TMLVTEIATLLFYIVSVPFLG). Topologically, residues 1100–1109 (DYFDLGYMTT) are extracellular. The helical transmembrane segment at 1110–1130 (VNYYAGLLVILLISIFPVWTA) threads the bilayer. Residues 1131 to 1151 (KAIYRRLHPPSYAKVQEFATP) are Cytoplasmic-facing. A required for endosomal targeting region spans residues 1131 to 1151 (KAIYRRLHPPSYAKVQEFATP).

Belongs to the cation transport ATPase (P-type) (TC 3.A.3) family. Type IV subfamily. In terms of assembly, interacts with MON2. Interacts with ANY1. Functions without a CDC50/LEM3 family accessory subunit. Mg(2+) serves as cofactor.

It localises to the endosome membrane. The protein resides in the golgi apparatus membrane. The enzyme catalyses ATP + H2O + phospholipidSide 1 = ADP + phosphate + phospholipidSide 2.. It carries out the reaction a 1,2-diacyl-sn-glycero-3-phospho-L-serine(out) + ATP + H2O = a 1,2-diacyl-sn-glycero-3-phospho-L-serine(in) + ADP + phosphate + H(+). It catalyses the reaction a 1,2-diacyl-sn-glycero-3-phosphoethanolamine(out) + ATP + H2O = a 1,2-diacyl-sn-glycero-3-phosphoethanolamine(in) + ADP + phosphate + H(+). Functionally, flippase that catalyzes the hydrolysis of ATP coupled to the transport of lysophosphatidylserine, phosphatidylethanolamine, and phosphatidylserine from the lumenal to the cytosolic leaflet of the Golgi apparatus membrane and ensures the maintenance of asymmetric distribution of phospholipids. Does not appear to transport phosphatidylcholine or sphingomyelin. May be involved in recycling from endosomes by driving the formation of SNX3-dependent recycling tubules. Required for COPI retrograde transport from the Golgi to the endoplasmic reticulum, Golgi-endosome trafficking, and Golgi-dependent protein glycosylation. The protein is Phospholipid-transporting ATPase NEO1 of Saccharomyces cerevisiae (strain ATCC 204508 / S288c) (Baker's yeast).